We begin with the raw amino-acid sequence, 828 residues long: Periplasmic nitrate reductase 1 (828 aa).

The segment at residues 1-30 (MKMTRRAFVKANAAASAAAVAGITLPASAA) is a signal peptide (tat-type signal). The 4Fe-4S Mo/W bis-MGD-type domain occupies 41 to 97 (IKWDKAPCRFCGTGCSVLVGTQNGRVVATQGDPEAPVNKGLNCIKGYFLSKIMYGKD). [4Fe-4S] cluster contacts are provided by cysteine 48, cysteine 51, cysteine 55, and cysteine 83. Mo-bis(molybdopterin guanine dinucleotide)-binding positions include lysine 85, glutamine 152, asparagine 177, cysteine 181, 214–221 (WGSNMAEM), 245–249 (STYYH), 264–266 (QTD), methionine 374, glutamine 378, asparagine 484, 510–511 (SD), lysine 533, aspartate 560, and 718–727 (TGRVLEHWHT). A substrate-binding site is contributed by phenylalanine 794. Positions 802 and 819 each coordinate Mo-bis(molybdopterin guanine dinucleotide).

This sequence belongs to the prokaryotic molybdopterin-containing oxidoreductase family. NasA/NapA/NarB subfamily. Component of the periplasmic nitrate reductase NapAB complex composed of NapA and NapB. [4Fe-4S] cluster serves as cofactor. Requires Mo-bis(molybdopterin guanine dinucleotide) as cofactor. Predicted to be exported by the Tat system. The position of the signal peptide cleavage has not been experimentally proven.

It localises to the periplasm. It carries out the reaction 2 Fe(II)-[cytochrome] + nitrate + 2 H(+) = 2 Fe(III)-[cytochrome] + nitrite + H2O. Catalytic subunit of the periplasmic nitrate reductase complex NapAB. Receives electrons from NapB and catalyzes the reduction of nitrate to nitrite. The protein is Periplasmic nitrate reductase 1 of Photobacterium profundum (strain SS9).